An 86-amino-acid chain; its full sequence is Small ribosomal subunit protein bS20 (86 aa).

Residues 1–25 (MANIKSQMKRIKTNEANRQRNKAVK) are disordered.

It belongs to the bacterial ribosomal protein bS20 family.

Functionally, binds directly to 16S ribosomal RNA. This Saccharopolyspora erythraea (strain ATCC 11635 / DSM 40517 / JCM 4748 / NBRC 13426 / NCIMB 8594 / NRRL 2338) protein is Small ribosomal subunit protein bS20.